The chain runs to 212 residues: MSEEKIPLIGEKFPEMEVITTHGKIKLPDYYQGKWFVLFSHPGDFTPVCTTEFYSFAKKYEEFKKLNTELIGLSVDSNISHIEWVMWIEKNLKVEIPFPIIADPMGNVAKRLGMIHAESSTSTVRAVFIVDDKGIVRLIMYYPMEIGRNIDEILRSIRALQLVDKSGVVIPANWPNNELIGNKVINPPPRTVKDAKLRINQPFDWWFTYKEI.

The region spanning 7–162 is the Thioredoxin domain; it reads PLIGEKFPEM…ILRSIRALQL (156 aa). Catalysis depends on Cys49, which acts as the Cysteine sulfenic acid (-SOH) intermediate. Position 125 (Arg125) interacts with substrate.

It belongs to the peroxiredoxin family. Prx6 subfamily. In terms of assembly, homodecamer. Pentamer of dimers that assemble into a ring structure.

The protein localises to the cytoplasm. The catalysed reaction is a hydroperoxide + [thioredoxin]-dithiol = an alcohol + [thioredoxin]-disulfide + H2O. Functionally, thiol-specific peroxidase that catalyzes the reduction of hydrogen peroxide and organic hydroperoxides to water and alcohols, respectively. Plays a role in cell protection against oxidative stress by detoxifying peroxides. The polypeptide is Peroxiredoxin 2 (Sulfurisphaera tokodaii (strain DSM 16993 / JCM 10545 / NBRC 100140 / 7) (Sulfolobus tokodaii)).